Here is a 770-residue protein sequence, read N- to C-terminus: Cyclopiane-type diterpene synthase (770 aa).

Residues Ile-5–Asn-335 are terpene cyclase. Residues Asp-97 and Asp-101 each coordinate Mg(2+). Residues Asp-97, Asp-101, Arg-190–Asp-193, Asn-234, Ser-238–Glu-242, and Arg-328–Tyr-329 each bind substrate. The DDXXD 1 motif lies at Asp-97–Asp-101. Residues Asn-234–Glu-242 carry the NSE/DTE motif. A prenyltransferase region spans residues Pro-336 to Leu-720. Residues Asn-371–Thr-397 form a disordered region. Over residues Lys-374 to Thr-383 the composition is skewed to polar residues. 3 residues coordinate isopentenyl diphosphate: Lys-423, Arg-426, and His-455. Residues Asp-462 and Asp-466 each contribute to the Mg(2+) site. A DDXXD 2 motif is present at residues Asp-462–Asp-466. A dimethylallyl diphosphate-binding site is contributed by Arg-471. An isopentenyl diphosphate-binding site is contributed by Arg-472. Lys-548, Thr-549, Gln-584, Asn-591, Lys-620, and Lys-630 together coordinate dimethylallyl diphosphate.

The protein in the N-terminal section; belongs to the terpene synthase family. In the C-terminal section; belongs to the FPP/GGPP synthase family. In terms of assembly, hexamer. Mg(2+) is required as a cofactor.

It carries out the reaction isopentenyl diphosphate + (2E,6E)-farnesyl diphosphate = (2E,6E,10E)-geranylgeranyl diphosphate + diphosphate. The catalysed reaction is (2E,6E,10E)-geranylgeranyl diphosphate + H2O = (+)-penichrysol + diphosphate. It functions in the pathway secondary metabolite biosynthesis; terpenoid biosynthesis. In terms of biological role, bifunctional terpene synthase converts dimethylallyl diphosphate (DMAPP) and isopentenyl diphosphate (IPP) into a cyclopiane-type diterpene. The C-terminal prenyltransferase (PT) domain of PcCS catalyzes formation of geranylgeranyl pyrophosphate (GGPP), whereas the N-terminal terpene cyclase (TC) domain catalyzes the cyclization of GGPP to the cyclopiane-type diterpene penichrysol. This chain is Cyclopiane-type diterpene synthase, found in Penicillium chrysogenum (Penicillium notatum).